The primary structure comprises 58 residues: Transactivator protein ORF121 (58 aa).

Stimulates the expression of 39k gene most probably by increasing IE1 expression. This chain is Transactivator protein ORF121 (AC121), found in Lepidoptera (butterflies and moths).